We begin with the raw amino-acid sequence, 365 residues long: Embryonic developmental protein tofu-6 (365 aa).

The RRM domain occupies alanine 13–asparagine 90.

In terms of biological role, required maternally for early embryonic cell divisions. May have a role in DNA replication. The chain is Embryonic developmental protein tofu-6 from Caenorhabditis briggsae.